A 210-amino-acid chain; its full sequence is Putative Dihydrofolate reductase (210 aa).

The 181-residue stretch at 4–184 (TLYCVVAVDT…IFYMFETYIK (181 aa)) folds into the DHFR domain.

It belongs to the dihydrofolate reductase family.

It catalyses the reaction (6S)-5,6,7,8-tetrahydrofolate + NADP(+) = 7,8-dihydrofolate + NADPH + H(+). This chain is Putative Dihydrofolate reductase (ORF2), found in Human herpesvirus 8 type P (isolate GK18) (HHV-8).